Here is a 454-residue protein sequence, read N- to C-terminus: T-box protein VegT (454 aa).

The T-box DNA-binding region spans 57 to 230 (LWSQFHQEGT…HNPFAKGFRE (174 aa)). The span at 229-241 (REQERSHKRDDVL) shows a compositional bias: basic and acidic residues. 2 disordered regions span residues 229–274 (REQE…ATRV) and 295–358 (ANQG…VPDS). Residues 308 to 325 (GVNQEQQVPTSSLNFYNK) show a composition bias toward polar residues.

In terms of assembly, forms a repression complex on the promoters of the nodal/nr1 and siamois genes with the maternal factors tcf7l1/tcf3 and pouf5.1/oct-25. Interacts (via C-terminus) with tcf7l1/tcf3 (via N-terminus). Also interacts with the other POU-domain transcription factors pou5f1.2/oct-91 and pou5f1.3/oct-60.

It localises to the nucleus. Transcription factor required for both mesoderm and endoderm formation in the embryo; signaling determinants and concentration levels may determine which germ layer is formed. Acts together with beta-catenin to activate genes that are responsible for mesoderm induction including wnt-8, eomes t/bra, siamois, mix1 and sox17. Directly binds to promoter DNA. Patterns the mesoderm along the dorsoventral and posterior axis. Activates siamois gene transcription when alone or in combination with beta-catenin, but inhibits siamois transcription in combination with pou5f1.1/oct-25. The chain is T-box protein VegT from Xenopus borealis (Kenyan clawed frog).